A 178-amino-acid polypeptide reads, in one-letter code: Glutamyl-tRNA(Gln) amidotransferase subunit C, mitochondrial (178 aa).

The transit peptide at 1–31 directs the protein to the mitochondrion; the sequence is MFRHIFTLGPRSISAITVRSRRALSSTAKPV. The disordered stretch occupies residues 26 to 67; the sequence is STAKPVSAPVTSDDRPNLDVKHLKHPTKVPQQPHKSDIDRRQ. Positions 37 to 46 are enriched in basic and acidic residues; the sequence is SDDRPNLDVK.

This sequence belongs to the GatC family. In terms of assembly, subunit of the heterotrimeric GatCAB amidotransferase (AdT) complex, composed of A, B and C subunits.

It is found in the mitochondrion. It carries out the reaction L-glutamyl-tRNA(Gln) + L-glutamine + ATP + H2O = L-glutaminyl-tRNA(Gln) + L-glutamate + ADP + phosphate + H(+). In terms of biological role, allows the formation of correctly charged Gln-tRNA(Gln) through the transamidation of misacylated Glu-tRNA(Gln) in the mitochondria. The reaction takes place in the presence of glutamine and ATP through an activated gamma-phospho-Glu-tRNA(Gln). This chain is Glutamyl-tRNA(Gln) amidotransferase subunit C, mitochondrial, found in Aedes aegypti (Yellowfever mosquito).